The primary structure comprises 450 residues: Tryptophan dimethylallyltransferase 2 (450 aa).

L-tryptophan is bound by residues 80 to 81 (IL) and E89. Positions 100, 186, and 188 each coordinate substrate. The L-tryptophan site is built by Y190 and R251. Substrate is bound by residues R264, K266, Y268, Q350, Y352, Y416, and Y420.

This sequence belongs to the tryptophan dimethylallyltransferase family. As to quaternary structure, homodimer.

The enzyme catalyses L-tryptophan + dimethylallyl diphosphate = 4-(3-methylbut-2-enyl)-L-tryptophan + diphosphate. It participates in alkaloid biosynthesis; ergot alkaloid biosynthesis. Catalyzes the first step of ergot alkaloid biosynthesis. Ergot alkaloids, which are produced by endophyte fungi, can enhance plant host fitness, but also cause livestock toxicosis to host plants. The sequence is that of Tryptophan dimethylallyltransferase 2 (dmaW2) from Epichloe coenophiala (Tall fescue endophyte fungus).